A 348-amino-acid polypeptide reads, in one-letter code: 3-methyl-2-oxobutanoate dehydrogenase subunit beta (348 aa).

Thiamine diphosphate is bound by residues glutamate 51, 80–82, glutamine 104, and 108–111; these read LAE and FSYP. Substrate-binding positions include 105–108 and histidine 151; that span reads FDGF. Histidine 151 functions as the Proton acceptor in the catalytic mechanism.

As to quaternary structure, heteromer of E1 alpha (BkdA) and beta (BkdB) subunits. Part of the BCKADH complex, consisting of multiple copies of BkdA/BkdB (E1), BkdC (E2) and Lpd (E3). It depends on thiamine diphosphate as a cofactor.

The enzyme catalyses N(6)-[(R)-lipoyl]-L-lysyl-[protein] + 3-methyl-2-oxobutanoate + H(+) = N(6)-[(R)-S(8)-2-methylpropanoyldihydrolipoyl]-L-lysyl-[protein] + CO2. In terms of biological role, component of the branched-chain alpha-ketoacid dehydrogenase (BCKADH) complex, that catalyzes the overall conversion of branched-chain alpha-ketoacids to acyl-CoA and CO(2). The sequence is that of 3-methyl-2-oxobutanoate dehydrogenase subunit beta (bkdB) from Mycobacterium tuberculosis (strain CDC 1551 / Oshkosh).